We begin with the raw amino-acid sequence, 363 residues long: dTDP-3-amino-3,6-dideoxy-alpha-D-galactopyranose transaminase (363 aa).

An N6-(pyridoxal phosphate)lysine modification is found at K185.

This sequence belongs to the DegT/DnrJ/EryC1 family. Requires pyridoxal 5'-phosphate as cofactor.

The catalysed reaction is dTDP-3-amino-3,6-dideoxy-alpha-D-galactopyranose + 2-oxoglutarate = dTDP-3-dehydro-6-deoxy-alpha-D-galactose + L-glutamate. Its function is as follows. Specifically aminates dTDP-6-deoxy-D-xylohex-3-ulose to form dTDP-D-Fucp3N in the biosynthesis of dTDP-3-acetamido-3,6-dideoxy-alpha-D-galactose, a glycan chain of the S-layer. The sequence is that of dTDP-3-amino-3,6-dideoxy-alpha-D-galactopyranose transaminase (fdtB) from Aneurinibacillus thermoaerophilus.